Reading from the N-terminus, the 116-residue chain is Large ribosomal subunit protein bL19 (116 aa).

Belongs to the bacterial ribosomal protein bL19 family.

Its function is as follows. This protein is located at the 30S-50S ribosomal subunit interface and may play a role in the structure and function of the aminoacyl-tRNA binding site. The chain is Large ribosomal subunit protein bL19 from Syntrophomonas wolfei subsp. wolfei (strain DSM 2245B / Goettingen).